A 196-amino-acid chain; its full sequence is Holliday junction branch migration complex subunit RuvA (196 aa).

The tract at residues 1-62 (MYEYINGLIT…ENEMTLYGFI (62 aa)) is domain I. Residues 63 to 141 (DENEKYLFNK…DLALSAGMTV (79 aa)) form a domain II region. Residues 142 to 146 (ETVPT) are flexible linker. Residues 147–196 (TDNQALADALAALESLGYSAKDVAKLQTVLANQKDTTDGYIRSALKFLVK) are domain III.

It belongs to the RuvA family. In terms of assembly, homotetramer. Forms an RuvA(8)-RuvB(12)-Holliday junction (HJ) complex. HJ DNA is sandwiched between 2 RuvA tetramers; dsDNA enters through RuvA and exits via RuvB. An RuvB hexamer assembles on each DNA strand where it exits the tetramer. Each RuvB hexamer is contacted by two RuvA subunits (via domain III) on 2 adjacent RuvB subunits; this complex drives branch migration. In the full resolvosome a probable DNA-RuvA(4)-RuvB(12)-RuvC(2) complex forms which resolves the HJ.

It localises to the cytoplasm. Functionally, the RuvA-RuvB-RuvC complex processes Holliday junction (HJ) DNA during genetic recombination and DNA repair, while the RuvA-RuvB complex plays an important role in the rescue of blocked DNA replication forks via replication fork reversal (RFR). RuvA specifically binds to HJ cruciform DNA, conferring on it an open structure. The RuvB hexamer acts as an ATP-dependent pump, pulling dsDNA into and through the RuvAB complex. HJ branch migration allows RuvC to scan DNA until it finds its consensus sequence, where it cleaves and resolves the cruciform DNA. The polypeptide is Holliday junction branch migration complex subunit RuvA (Leuconostoc citreum (strain KM20)).